The sequence spans 130 residues: Large ribosomal subunit protein bL19 (130 aa).

It belongs to the bacterial ribosomal protein bL19 family.

This protein is located at the 30S-50S ribosomal subunit interface and may play a role in the structure and function of the aminoacyl-tRNA binding site. In Burkholderia orbicola (strain MC0-3), this protein is Large ribosomal subunit protein bL19.